Here is a 28-residue protein sequence, read N- to C-terminus: 14-3-3-like protein 4 (28 aa).

It belongs to the 14-3-3 family.

In Pseudotsuga menziesii (Douglas-fir), this protein is 14-3-3-like protein 4.